The primary structure comprises 479 residues: ESX-1 secretion system ATPase EccB1 (479 aa).

At 1-44 (MAGFRLTTKVQVSGWRFLLRRVEHAIVRRDTRMFDDPLQFYSRA) the chain is on the cytoplasmic side. The helical transmembrane segment at 45-65 (VFAGVVVSVLICLGAALMAYF) threads the bilayer. Over 66–479 (KPLGKQGSDQ…NPRKVASGEG (414 aa)) the chain is Periplasmic. Cysteines 152 and 347 form a disulfide.

Belongs to the EccB family. In terms of assembly, part of the ESX-1 / type VII secretion system (T7SS), which is composed of cytosolic and membrane components. The ESX-1 membrane complex is composed of EccB1, EccCa1, EccCb1, EccD1 and EccE1.

Its subcellular location is the cell inner membrane. In terms of biological role, an ATPase. Part of the ESX-1 / type VII specialized secretion system (T7SS), which exports several proteins including EsxA and EsxB. Plays a role in DNA conjugation, in both donor and recipient strains. This is ESX-1 secretion system ATPase EccB1 from Mycolicibacterium smegmatis (strain MKD8) (Mycobacterium smegmatis).